A 106-amino-acid polypeptide reads, in one-letter code: Iron-sulfur cluster assembly protein CyaY (106 aa).

The protein belongs to the frataxin family.

Its function is as follows. Involved in iron-sulfur (Fe-S) cluster assembly. May act as a regulator of Fe-S biogenesis. The protein is Iron-sulfur cluster assembly protein CyaY of Salmonella arizonae (strain ATCC BAA-731 / CDC346-86 / RSK2980).